Consider the following 156-residue polypeptide: Transcriptional repressor NrdR (156 aa).

The segment at 3–34 (CPKCSSTHSRVVDSRHADDANAIRRRRECENC) is a zinc-finger region. The ATP-cone domain occupies 49–139 (LIVVKKDGTR…VYKEFKDVDQ (91 aa)).

This sequence belongs to the NrdR family. Requires Zn(2+) as cofactor.

Its function is as follows. Negatively regulates transcription of bacterial ribonucleotide reductase nrd genes and operons by binding to NrdR-boxes. The protein is Transcriptional repressor NrdR of Staphylococcus haemolyticus (strain JCSC1435).